A 487-amino-acid chain; its full sequence is MTELFIDGAWVAGSGPVFASRNPGTDAIAWQGASASAADVERAVASARRAFAGWSALDFDARCEIVKRFAALLTERKEALAAAIGRETGKPLWEARTEVAAMAAKVAISIQAYHERTGEKRQDMADGVAVLRHRPHGVVAVFGPYNFPGHLPNGHIVPALIAGNTVVFKPSELAPGVARATVEVWHEAGLPAGVLNLVQGEKDTGIALANHRQIDGLFFTGSSDTGTLLHKQFGGRPEIVLALEMGGNNPLVIGAVEDIDAAVHHTIQSAFLSAGQRCTCARRIFVPQGAHGERFLARLVDVTSKITADVFDADPQPFMGAVISARAAAKLVDAQARLIEQGARPIIEMTQRDARLGFVNASIIDVTDVARLPDEEHFGPLAQIVRYARFDEAIERANDTAFGLSAGLLSDDAHAWEQFRRTIRAGIVNWNRPTNGASSAAPFGGTGRSGNHRPSAYYAADYCAYPMASVESTQLSLPASLSPGLHF.

221–226 (GSSDTG) lines the NAD(+) pocket. Residues E244 and C278 contribute to the active site.

This sequence belongs to the aldehyde dehydrogenase family. AstD subfamily.

It carries out the reaction N-succinyl-L-glutamate 5-semialdehyde + NAD(+) + H2O = N-succinyl-L-glutamate + NADH + 2 H(+). It functions in the pathway amino-acid degradation; L-arginine degradation via AST pathway; L-glutamate and succinate from L-arginine: step 4/5. Functionally, catalyzes the NAD-dependent reduction of succinylglutamate semialdehyde into succinylglutamate. In Burkholderia vietnamiensis (strain G4 / LMG 22486) (Burkholderia cepacia (strain R1808)), this protein is N-succinylglutamate 5-semialdehyde dehydrogenase.